The primary structure comprises 116 residues: S-adenosylmethionine decarboxylase proenzyme (116 aa).

The Schiff-base intermediate with substrate; via pyruvic acid role is filled by Ser-63. Ser-63 is subject to Pyruvic acid (Ser); by autocatalysis. The active-site Proton acceptor; for processing activity is the His-68. Residue Cys-83 is the Proton donor; for catalytic activity of the active site.

Belongs to the prokaryotic AdoMetDC family. Type 1 subfamily. Heterotetramer of two alpha and two beta chains arranged as a dimer of alpha/beta heterodimers. The cofactor is pyruvate. In terms of processing, is synthesized initially as an inactive proenzyme. Formation of the active enzyme involves a self-maturation process in which the active site pyruvoyl group is generated from an internal serine residue via an autocatalytic post-translational modification. Two non-identical subunits are generated from the proenzyme in this reaction, and the pyruvate is formed at the N-terminus of the alpha chain, which is derived from the carboxyl end of the proenzyme. The post-translation cleavage follows an unusual pathway, termed non-hydrolytic serinolysis, in which the side chain hydroxyl group of the serine supplies its oxygen atom to form the C-terminus of the beta chain, while the remainder of the serine residue undergoes an oxidative deamination to produce ammonia and the pyruvoyl group blocking the N-terminus of the alpha chain.

It catalyses the reaction S-adenosyl-L-methionine + H(+) = S-adenosyl 3-(methylsulfanyl)propylamine + CO2. The protein operates within amine and polyamine biosynthesis; S-adenosylmethioninamine biosynthesis; S-adenosylmethioninamine from S-adenosyl-L-methionine: step 1/1. Catalyzes the decarboxylation of S-adenosylmethionine to S-adenosylmethioninamine (dcAdoMet), the propylamine donor required for the synthesis of the polyamines spermine and spermidine from the diamine putrescine. In Clostridium botulinum (strain 657 / Type Ba4), this protein is S-adenosylmethionine decarboxylase proenzyme.